Here is a 131-residue protein sequence, read N- to C-terminus: Small ribosomal subunit protein uS8 (131 aa).

It belongs to the universal ribosomal protein uS8 family. As to quaternary structure, part of the 30S ribosomal subunit. Contacts proteins S5 and S12.

One of the primary rRNA binding proteins, it binds directly to 16S rRNA central domain where it helps coordinate assembly of the platform of the 30S subunit. The sequence is that of Small ribosomal subunit protein uS8 from Legionella pneumophila subsp. pneumophila (strain Philadelphia 1 / ATCC 33152 / DSM 7513).